Reading from the N-terminus, the 249-residue chain is Putative protein SNX29P2 (249 aa).

Disordered regions lie at residues 109–171 and 188–249; these read QVTN…SNSW and DVKS…PGFK. Residues 156–170 show a composition bias toward low complexity; that stretch reads SPFGPNSNGSQSSNS. The span at 193 to 204 shows a compositional bias: acidic residues; the sequence is DDEDVDENEDDV. The span at 226–242 shows a compositional bias: polar residues; the sequence is HSVTQAGVQWHDLSSLQ.

The protein belongs to the sorting nexin family.

The chain is Putative protein SNX29P2 (SNX29P2) from Homo sapiens (Human).